The sequence spans 805 residues: U-box domain-containing protein 70 (805 aa).

TPR repeat units follow at residues 15-48, 49-82, 90-127, 129-153, 154-187, 189-221, and 222-255; these read ARRE…DPRD, ISFL…GREL, ARAL…HYSE, TLAK…DQEA, ADHH…NPKD, RVFS…DPTF, and LKGY…DPNN. The tract at residues 136 to 160 is disordered; that stretch reads AEEARKEIEERERLDQEAADHHRDR. Residues 341–417 are a coiled coil; it reads RKETEESLSR…VREVEELRQK (77 aa). The region spanning 445–711 is the Protein kinase domain; that stretch reads FSNSLKIGEG…GEVWAIVEAI (267 aa). ATP is bound by residues 451–459 and Lys472; that span reads IGEGGFGCV. Residue Asp567 is the Proton acceptor of the active site. Residues 730 to 804 form the U-box domain; it reads SPPSYFICPI…QEWLQQHSMS (75 aa).

This sequence belongs to the protein kinase superfamily. Ser/Thr protein kinase family. As to quaternary structure, interacts with MODD.

The catalysed reaction is L-seryl-[protein] + ATP = O-phospho-L-seryl-[protein] + ADP + H(+). The enzyme catalyses L-threonyl-[protein] + ATP = O-phospho-L-threonyl-[protein] + ADP + H(+). It carries out the reaction S-ubiquitinyl-[E2 ubiquitin-conjugating enzyme]-L-cysteine + [acceptor protein]-L-lysine = [E2 ubiquitin-conjugating enzyme]-L-cysteine + N(6)-ubiquitinyl-[acceptor protein]-L-lysine.. The protein operates within protein modification; protein ubiquitination. Functions as an E3 ubiquitin ligase. Is recruited by MODD to promote ubiquitination of BZIP46, a positive regulator of abscisic acid (ABA) signaling and drought stress tolerance. In Oryza sativa subsp. japonica (Rice), this protein is U-box domain-containing protein 70.